The primary structure comprises 223 residues: Adenylate kinase 4, mitochondrial (223 aa).

15–20 (GSGKGT) is a binding site for a ribonucleoside 5'-triphosphate. The tract at residues 35–64 (SSGHLLRENLKTGTEVGDVAKQYLEKGLLV) is NMP. AMP-binding residues include Ser36 and Arg41. The residue at position 60 (Lys60) is an N6-succinyllysine. Residues 62-64 (LLV), 89-92 (GFPR), and Gln96 contribute to the AMP site. The segment at 125–162 (RRWIHPSSGRVYNLDFNPPQVQGIDDITGEPLVQQEDD) is LID. Residues Arg126 and 135 to 136 (VY) contribute to the a ribonucleoside 5'-triphosphate site. Arg170 serves as a coordination point for AMP. At Lys175 the chain carries N6-acetyllysine. N6-acetyllysine; alternate occurs at positions 179 and 186. N6-succinyllysine; alternate is present on residues Lys179 and Lys186. A ribonucleoside 5'-triphosphate is bound at residue Thr199.

This sequence belongs to the adenylate kinase family. AK3 subfamily. As to quaternary structure, monomer. Interacts with SLC25A5/ANT2. In terms of tissue distribution, expressed in kidney, liver, stomach, brain, spinal cord, heart, ovary, oviduct, colon, jejunum, ileum and testis (at protein level). In the brain, expressed in the pyramidal cells of the cerebrum and glial cells in the cerebellum (at protein level). In the heart, expressed by myocytes (at protein level). In the kidney, expressed in the proximal to distal tubule in the cortex and the outer and inner zones of the medulla (at protein level). In the stomach, expressed in stratified squamous epithelia in the forestomach and in the gastric pit and mucus producing cells of the glandular stomach (at protein level). Expressed in epithelial cells of the jejunum, ileum, and colon (at protein level). In the testis, expressed by spermatocytes (at protein level). In the ovaries, expressed by oocytes, follicular epithelial cells, and corpus luteum cells (at protein level). In the oviduct, expressed in the epithelia of the isthmus and the ciliated cells of the ampulla (at protein level). Expressed in the pyramidal cells in the hippocampus.

The protein resides in the mitochondrion matrix. The enzyme catalyses a ribonucleoside 5'-phosphate + ATP = a ribonucleoside 5'-diphosphate + ADP. The catalysed reaction is AMP + ATP = 2 ADP. It catalyses the reaction GTP + AMP = GDP + ADP. It carries out the reaction CMP + ATP = CDP + ADP. The enzyme catalyses GTP + CMP = CDP + GDP. The catalysed reaction is dAMP + ATP = dADP + ADP. It catalyses the reaction dCMP + ATP = dCDP + ADP. It carries out the reaction a 2'-deoxyribonucleoside 5'-diphosphate + ATP = a 2'-deoxyribonucleoside 5'-triphosphate + ADP. The enzyme catalyses a ribonucleoside 5'-diphosphate + ATP = a ribonucleoside 5'-triphosphate + ADP. The catalysed reaction is GDP + ATP = GTP + ADP. It catalyses the reaction CDP + GTP = CTP + GDP. It carries out the reaction CDP + ATP = CTP + ADP. The enzyme catalyses UDP + ATP = UTP + ADP. The catalysed reaction is GTP + UDP = UTP + GDP. It catalyses the reaction dADP + GTP = dATP + GDP. It carries out the reaction dCDP + GTP = dCTP + GDP. The enzyme catalyses dCDP + ATP = dCTP + ADP. The catalysed reaction is dGDP + ATP = dGTP + ADP. It catalyses the reaction dTDP + GTP = dTTP + GDP. It carries out the reaction dTDP + ATP = dTTP + ADP. In terms of biological role, broad-specificity mitochondrial nucleoside phosphate kinase involved in cellular nucleotide homeostasis by catalyzing nucleoside-phosphate interconversions. Similar to other adenylate kinases, preferentially catalyzes the phosphorylation of the nucleoside monophosphate AMP with ATP as phosphate donor to produce ADP. Phosphorylates only AMP when using GTP as phosphate donor. In vitro, can also catalyze the phosphorylation of CMP, dAMP and dCMP and use GTP as an alternate phosphate donor. Moreover, exhibits a diphosphate kinase activity, producing ATP, CTP, GTP, UTP, TTP, dATP, dCTP and dGTP from the corresponding diphosphate substrates with either ATP or GTP as phosphate donors. Plays a role in controlling cellular ATP levels by regulating phosphorylation and activation of the energy sensor protein kinase AMPK. Plays a protective role in the cellular response to oxidative stress. This chain is Adenylate kinase 4, mitochondrial, found in Mus musculus (Mouse).